We begin with the raw amino-acid sequence, 364 residues long: UDP-N-acetylglucosamine--N-acetylmuramyl-(pentapeptide) pyrophosphoryl-undecaprenol N-acetylglucosamine transferase (364 aa).

Residues 13 to 15 (TGG), N125, R165, S192, and Q293 each bind UDP-N-acetyl-alpha-D-glucosamine.

This sequence belongs to the glycosyltransferase 28 family. MurG subfamily.

The protein localises to the cell inner membrane. It carries out the reaction di-trans,octa-cis-undecaprenyl diphospho-N-acetyl-alpha-D-muramoyl-L-alanyl-D-glutamyl-meso-2,6-diaminopimeloyl-D-alanyl-D-alanine + UDP-N-acetyl-alpha-D-glucosamine = di-trans,octa-cis-undecaprenyl diphospho-[N-acetyl-alpha-D-glucosaminyl-(1-&gt;4)]-N-acetyl-alpha-D-muramoyl-L-alanyl-D-glutamyl-meso-2,6-diaminopimeloyl-D-alanyl-D-alanine + UDP + H(+). The protein operates within cell wall biogenesis; peptidoglycan biosynthesis. Cell wall formation. Catalyzes the transfer of a GlcNAc subunit on undecaprenyl-pyrophosphoryl-MurNAc-pentapeptide (lipid intermediate I) to form undecaprenyl-pyrophosphoryl-MurNAc-(pentapeptide)GlcNAc (lipid intermediate II). This Cereibacter sphaeroides (strain ATCC 17025 / ATH 2.4.3) (Rhodobacter sphaeroides) protein is UDP-N-acetylglucosamine--N-acetylmuramyl-(pentapeptide) pyrophosphoryl-undecaprenol N-acetylglucosamine transferase.